Here is a 326-residue protein sequence, read N- to C-terminus: Vitamin B12 import system permease protein BtuC (326 aa).

9 consecutive transmembrane segments (helical) span residues 13–35, 55–77, 90–107, 111–133, 146–168, 188–205, 242–264, 274–296, and 303–322; these read IRWL…CAGE, IRLP…GAVM, LLGV…AVLL, QLPN…LILL, LLAG…YFST, WRQS…LWIC, MVGV…PHIL, VLLP…VARL, and LPIG…WLLL.

This sequence belongs to the binding-protein-dependent transport system permease family. FecCD subfamily. The complex is composed of two ATP-binding proteins (BtuD), two transmembrane proteins (BtuC) and a solute-binding protein (BtuF).

Its subcellular location is the cell inner membrane. Functionally, part of the ABC transporter complex BtuCDF involved in vitamin B12 import. Involved in the translocation of the substrate across the membrane. The chain is Vitamin B12 import system permease protein BtuC from Shigella flexneri.